The sequence spans 93 residues: Alpha-defensin 22 (93 aa).

A signal peptide spans 1-19; that stretch reads MKKLVLLSALVLLAYQVQT. A propeptide spanning residues 20-58 is cleaved from the precursor; that stretch reads DPIQNTDEETNTEEQPGEEDQAVSVSFGGQEGSALHEKL. Positions 22–41 are disordered; the sequence is IQNTDEETNTEEQPGEEDQA. The span at 25-40 shows a compositional bias: acidic residues; it reads TDEETNTEEQPGEEDQ. Intrachain disulfides connect C64-C89, C66-C81, and C71-C88.

It belongs to the alpha-defensin family.

The protein localises to the secreted. Functionally, may have microbicidal activities. The polypeptide is Alpha-defensin 22 (Defa22) (Mus musculus (Mouse)).